A 264-amino-acid polypeptide reads, in one-letter code: Dehydrodolichyl diphosphate synthase complex subunit SPAC4D7.04c (264 aa).

It belongs to the UPP synthase family. Forms an active dehydrodolichyl diphosphate synthase complex with nus1. It depends on Mg(2+) as a cofactor.

It is found in the endoplasmic reticulum membrane. It carries out the reaction n isopentenyl diphosphate + (2E,6E)-farnesyl diphosphate = a di-trans,poly-cis-polyprenyl diphosphate + n diphosphate. The protein operates within protein modification; protein glycosylation. Its function is as follows. With nus1, forms the dehydrodolichyl diphosphate synthase (DDS) complex, an essential component of the dolichol monophosphate (Dol-P) biosynthetic machinery. Adds multiple copies of isopentenyl pyrophosphate (IPP) to farnesyl pyrophosphate (FPP) to produce dehydrodolichyl diphosphate (Dedol-PP), a precursor of dolichol which is utilized as a sugar carrier in protein glycosylation in the endoplasmic reticulum (ER). The protein is Dehydrodolichyl diphosphate synthase complex subunit SPAC4D7.04c of Schizosaccharomyces pombe (strain 972 / ATCC 24843) (Fission yeast).